Reading from the N-terminus, the 194-residue chain is UPF0215 protein PF2042 (194 aa).

It belongs to the UPF0215 family.

The polypeptide is UPF0215 protein PF2042 (Pyrococcus furiosus (strain ATCC 43587 / DSM 3638 / JCM 8422 / Vc1)).